A 516-amino-acid chain; its full sequence is Protein indeterminate-domain 4, chloroplastic (516 aa).

A compositionally biased stretch (low complexity) spans 1–26; sequence MSSSSYNTSVIPSSSSSAQPFFITSS. Residues 1–68 form a disordered region; it reads MSSSSYNTSV…QPGNPNPDAE (68 aa). The N-terminal 70 residues, 1–70, are a transit peptide targeting the chloroplast; that stretch reads MSSSSYNTSV…GNPNPDAEVV (70 aa). Ser-73 carries the post-translational modification Phosphoserine. 2 consecutive C2H2-type zinc fingers follow at residues 83-105 and 124-154; these read FICD…RRGH and YLCP…YRKH. Positions 146-153 match the Nuclear localization signal motif; the sequence is IKKHYYRK. The segment at 159–182 adopts a C2H2-type 2; degenerate zinc-finger fold; sequence WKCEKCSKRYAVQSDWKAHSKTCG. Zn(2+)-binding residues include Cys-161, Cys-164, His-177, Cys-181, Cys-188, Cys-190, His-203, and Cys-207. Residues 186-209 form a CCHC-type 2; atypical zinc finger; the sequence is YRCDCGTIFSRRDSYITHRAFCDA. Residues 196–208 form an SHR-binding region; that stretch reads RRDSYITHRAFCD. A disordered region spans residues 483 to 516; the sequence is NRGGGGGGRGSARGGVSLDGEAKFPEQNYPFGRG. Residues 484–495 show a composition bias toward gly residues; sequence RGGGGGGRGSAR.

As to quaternary structure, binds to RGA and SCL3 competitively in the nucleus.

The protein localises to the plastid. Its subcellular location is the chloroplast. It is found in the nucleus. Transcription factor that may act a transcriptional activator of nuclear-encoded photosynthetic gene expression. Binds DNA via its zinc fingers. Recognizes and binds to SCL3 promoter sequence 5'-AGACAA-3' to promote its expression when in complex with RGA. The polypeptide is Protein indeterminate-domain 4, chloroplastic (Arabidopsis thaliana (Mouse-ear cress)).